The chain runs to 236 residues: uncharacterized protein (236 aa).

This is an uncharacterized protein from Schizosaccharomyces pombe (strain 972 / ATCC 24843) (Fission yeast).